The primary structure comprises 122 residues: Large ribosomal subunit protein uL14 (122 aa).

The protein belongs to the universal ribosomal protein uL14 family. Part of the 50S ribosomal subunit. Forms a cluster with proteins L3 and L19. In the 70S ribosome, L14 and L19 interact and together make contacts with the 16S rRNA in bridges B5 and B8.

Its function is as follows. Binds to 23S rRNA. Forms part of two intersubunit bridges in the 70S ribosome. In Renibacterium salmoninarum (strain ATCC 33209 / DSM 20767 / JCM 11484 / NBRC 15589 / NCIMB 2235), this protein is Large ribosomal subunit protein uL14.